We begin with the raw amino-acid sequence, 129 residues long: Phosphoribosyl-AMP cyclohydrolase (129 aa).

A Mg(2+)-binding site is contributed by Asp78. Zn(2+) is bound at residue Cys79. Residues Asp80 and Asp82 each contribute to the Mg(2+) site. Zn(2+)-binding residues include Cys96 and Cys103.

This sequence belongs to the PRA-CH family. Homodimer. It depends on Mg(2+) as a cofactor. Zn(2+) serves as cofactor.

Its subcellular location is the cytoplasm. The catalysed reaction is 1-(5-phospho-beta-D-ribosyl)-5'-AMP + H2O = 1-(5-phospho-beta-D-ribosyl)-5-[(5-phospho-beta-D-ribosylamino)methylideneamino]imidazole-4-carboxamide. It participates in amino-acid biosynthesis; L-histidine biosynthesis; L-histidine from 5-phospho-alpha-D-ribose 1-diphosphate: step 3/9. Its function is as follows. Catalyzes the hydrolysis of the adenine ring of phosphoribosyl-AMP. In Nitrosomonas europaea (strain ATCC 19718 / CIP 103999 / KCTC 2705 / NBRC 14298), this protein is Phosphoribosyl-AMP cyclohydrolase.